The primary structure comprises 315 residues: Acetyl-coenzyme A carboxylase carboxyl transferase subunit alpha (315 aa).

One can recognise a CoA carboxyltransferase C-terminal domain in the interval 38–292 (RLQKKSNELT…KLRLKEDLAE (255 aa)).

Belongs to the AccA family. In terms of assembly, acetyl-CoA carboxylase is a heterohexamer composed of biotin carboxyl carrier protein (AccB), biotin carboxylase (AccC) and two subunits each of ACCase subunit alpha (AccA) and ACCase subunit beta (AccD).

It is found in the cytoplasm. It carries out the reaction N(6)-carboxybiotinyl-L-lysyl-[protein] + acetyl-CoA = N(6)-biotinyl-L-lysyl-[protein] + malonyl-CoA. It functions in the pathway lipid metabolism; malonyl-CoA biosynthesis; malonyl-CoA from acetyl-CoA: step 1/1. Component of the acetyl coenzyme A carboxylase (ACC) complex. First, biotin carboxylase catalyzes the carboxylation of biotin on its carrier protein (BCCP) and then the CO(2) group is transferred by the carboxyltransferase to acetyl-CoA to form malonyl-CoA. This chain is Acetyl-coenzyme A carboxylase carboxyl transferase subunit alpha, found in Haemophilus influenzae (strain 86-028NP).